The chain runs to 876 residues: MSDSQASLRENVRLLGDCLGESMSNHLGEGFLEKVENIRLLSKNGRQSGDSAALIQALEALDDKEIVPVARAFNQFLNLSNIAEQYHRVHRRRTNESLGVYHNPVGDLLTRLSKQSFTAEQMISSLQSQSIELVLTAHPTEVVRRSLIRKYDNISSELEALDKDNILPLEETKHIRRLKEIITQAWHTDEIREDRPTPVDEAKWGFAVIEQSLWQAVPRFFRQLDEQFSEFSKEDRLPLDLAPIRFATWMGGDRDGNPNVTHKVTKEVTLLARWMAADLYIKDLNVLRSEFSMTQCNEALRARVGDSAQPYREVLRHLENKMLATKNWAKACLDGKPTSGEDIFLDIQELTDDLILCYQSLLDCGMKVIANGSLLDLIRCAATFGATLVRLDVRQDASRHIDALSAITRFYGLGDYAEWDEASRQAFLLTELNSKRPLLPMEWTPTAEVKEVLDTFAMISQGQQNSFGSYVISMASAPSDVLAVALMLKESGVGFPMRIVPLFETLADLDNAEPIIEQLFSIPWYKSYINGRQEVMIGYSDSAKDAGQIAATWGQYRAQEALTRLCKKHGIHLTLFHGRGGTVGRGGGPAHVAILSQPPGSVNGAIRVTEQGEMIRFKFGIPDIAVRSLELYCSAVMEASLIPAEPPKEEWRAIMDEMAEVGMNQYRSIIRGHEDFVPYFRATTPEQELAKLPLGSRPARRRSDGGVESLRAIPWIFAWMQIRLMLPAWLGAESALQQGVESGNLEKLREMHKKWPFFGAYLDMLDMVLAKAEPEIAEYYEKRLVGEELQGLGRLLRGKLKQVSELVKMLKKQERLIEDNKTIRQSIDVRNPYIDPLHYLQAELLYRSRKDEENAEVNKALMITMAGIASGMQNTG.

Catalysis depends on residues H138 and K544.

This sequence belongs to the PEPCase type 1 family. Mg(2+) serves as cofactor.

The enzyme catalyses oxaloacetate + phosphate = phosphoenolpyruvate + hydrogencarbonate. Forms oxaloacetate, a four-carbon dicarboxylic acid source for the tricarboxylic acid cycle. The chain is Phosphoenolpyruvate carboxylase from Marinomonas sp. (strain MWYL1).